Here is a 229-residue protein sequence, read N- to C-terminus: DNA mismatch repair protein MutH (229 aa).

This sequence belongs to the MutH family.

It is found in the cytoplasm. Its function is as follows. Sequence-specific endonuclease that cleaves unmethylated GATC sequences. It is involved in DNA mismatch repair. In Escherichia coli O45:K1 (strain S88 / ExPEC), this protein is DNA mismatch repair protein MutH.